The chain runs to 185 residues: Elongation factor P (185 aa).

This sequence belongs to the elongation factor P family.

It is found in the cytoplasm. The protein operates within protein biosynthesis; polypeptide chain elongation. Its function is as follows. Involved in peptide bond synthesis. Stimulates efficient translation and peptide-bond synthesis on native or reconstituted 70S ribosomes in vitro. Probably functions indirectly by altering the affinity of the ribosome for aminoacyl-tRNA, thus increasing their reactivity as acceptors for peptidyl transferase. This is Elongation factor P from Streptococcus pyogenes serotype M5 (strain Manfredo).